We begin with the raw amino-acid sequence, 223 residues long: Glutathione S-transferase U6 (223 aa).

Residues 5-84 enclose the GST N-terminal domain; it reads EEVKLLGIWA…YIDETWKHNP (80 aa). Glutathione contacts are provided by residues 15-16, 41-42, 55-56, and 68-69; these read SP, NK, KI, and ES. In terms of domain architecture, GST C-terminal spans 89-216; it reads DPFQRSKARV…EKHIEHMNNM (128 aa). Thr-150 is modified (phosphothreonine).

Belongs to the GST superfamily. Tau family.

The protein resides in the cytoplasm. It is found in the cytosol. It carries out the reaction RX + glutathione = an S-substituted glutathione + a halide anion + H(+). Its function is as follows. May be involved in the conjugation of reduced glutathione to a wide number of exogenous and endogenous hydrophobic electrophiles and have a detoxification role against certain herbicides. The protein is Glutathione S-transferase U6 (GSTU6) of Arabidopsis thaliana (Mouse-ear cress).